A 136-amino-acid chain; its full sequence is Holo-[acyl-carrier-protein] synthase (136 aa).

2 residues coordinate Mg(2+): D8 and E57.

This sequence belongs to the P-Pant transferase superfamily. AcpS family. Mg(2+) is required as a cofactor.

Its subcellular location is the cytoplasm. The enzyme catalyses apo-[ACP] + CoA = holo-[ACP] + adenosine 3',5'-bisphosphate + H(+). Transfers the 4'-phosphopantetheine moiety from coenzyme A to a Ser of acyl-carrier-protein. In Methylorubrum populi (strain ATCC BAA-705 / NCIMB 13946 / BJ001) (Methylobacterium populi), this protein is Holo-[acyl-carrier-protein] synthase.